The following is a 494-amino-acid chain: Guanosine-5'-triphosphate,3'-diphosphate pyrophosphatase (494 aa).

Belongs to the GppA/Ppx family. GppA subfamily.

The catalysed reaction is guanosine 3'-diphosphate 5'-triphosphate + H2O = guanosine 3',5'-bis(diphosphate) + phosphate + H(+). The protein operates within purine metabolism; ppGpp biosynthesis; ppGpp from GTP: step 2/2. Its function is as follows. Catalyzes the conversion of pppGpp to ppGpp. Guanosine pentaphosphate (pppGpp) is a cytoplasmic signaling molecule which together with ppGpp controls the 'stringent response', an adaptive process that allows bacteria to respond to amino acid starvation, resulting in the coordinated regulation of numerous cellular activities. This is Guanosine-5'-triphosphate,3'-diphosphate pyrophosphatase from Escherichia coli O157:H7.